A 162-amino-acid chain; its full sequence is Proepiregulin (162 aa).

The first 22 residues, 1 to 22 (METLPASWVLTLLCLGSHLLQA), serve as a signal peptide directing secretion. The propeptide occupies 23–55 (VISTTVIPSCIPGESEDNCTALVQMEDDPRVAQ). Residue N40 is glycosylated (N-linked (GlcNAc...) asparagine). Topologically, residues 53 to 112 (VAQVQITKCSSDMDGYCLHGQCIYLVDMREKFCRCEVGYTGLRCEHFFLTVHQPLSKEYV) are extracellular. Residues 57 to 97 (QITKCSSDMDGYCLHGQCIYLVDMREKFCRCEVGYTGLRCE) enclose the EGF-like domain. 3 disulfide bridges follow: C61/C74, C69/C85, and C87/C96. Residues 102–162 (TVHQPLSKEY…TSGDPVLPQV (61 aa)) constitute a propeptide, removed in mature form. A helical transmembrane segment spans residues 113–133 (ALTVILIFLFLIITAGCIYYF). At 134-162 (CRWYKNRKSKKSREEYERVTSGDPVLPQV) the chain is on the cytoplasmic side.

Interacts with EGFR and ERBB4.

It localises to the secreted. The protein resides in the extracellular space. Its subcellular location is the cell membrane. Ligand of the EGF receptor/EGFR and ERBB4. Stimulates EGFR and ERBB4 tyrosine phosphorylation. Contributes to inflammation, wound healing, tissue repair, and oocyte maturation by regulating angiogenesis and vascular remodeling and by stimulating cell proliferation. The protein is Proepiregulin (Ereg) of Mus musculus (Mouse).